Here is a 312-residue protein sequence, read N- to C-terminus: Tyrosine recombinase XerC (312 aa).

One can recognise a Core-binding (CB) domain in the interval 1–103 (MISAFYAFLD…AIKSFSQYCI (103 aa)). One can recognise a Tyr recombinase domain in the interval 124-306 (ELPSPITYEQ…SMKLKKQTHE (183 aa)). Active-site residues include Arg-164, Lys-188, His-258, Arg-261, and His-284. Tyr-293 functions as the O-(3'-phospho-DNA)-tyrosine intermediate in the catalytic mechanism.

Belongs to the 'phage' integrase family. XerC subfamily. Forms a cyclic heterotetrameric complex composed of two molecules of XerC and two molecules of XerD.

Its subcellular location is the cytoplasm. Site-specific tyrosine recombinase, which acts by catalyzing the cutting and rejoining of the recombining DNA molecules. The XerC-XerD complex is essential to convert dimers of the bacterial chromosome into monomers to permit their segregation at cell division. It also contributes to the segregational stability of plasmids. This chain is Tyrosine recombinase XerC, found in Chlamydia caviae (strain ATCC VR-813 / DSM 19441 / 03DC25 / GPIC) (Chlamydophila caviae).